Here is a 479-residue protein sequence, read N- to C-terminus: Cobyric acid synthase (479 aa).

Positions 250–442 (TRTVAVVAYP…LHGLFEDAAA (193 aa)) constitute a GATase cobBQ-type domain. Catalysis depends on C331, which acts as the Nucleophile. Residue H434 is part of the active site.

It belongs to the CobB/CobQ family. CobQ subfamily.

Its pathway is cofactor biosynthesis; adenosylcobalamin biosynthesis. Catalyzes amidations at positions B, D, E, and G on adenosylcobyrinic A,C-diamide. NH(2) groups are provided by glutamine, and one molecule of ATP is hydrogenolyzed for each amidation. The protein is Cobyric acid synthase of Variovorax paradoxus (strain S110).